The chain runs to 481 residues: Aspartyl/glutamyl-tRNA(Asn/Gln) amidotransferase subunit B (481 aa).

The protein belongs to the GatB/GatE family. GatB subfamily. In terms of assembly, heterotrimer of A, B and C subunits.

It carries out the reaction L-glutamyl-tRNA(Gln) + L-glutamine + ATP + H2O = L-glutaminyl-tRNA(Gln) + L-glutamate + ADP + phosphate + H(+). The catalysed reaction is L-aspartyl-tRNA(Asn) + L-glutamine + ATP + H2O = L-asparaginyl-tRNA(Asn) + L-glutamate + ADP + phosphate + 2 H(+). Its function is as follows. Allows the formation of correctly charged Asn-tRNA(Asn) or Gln-tRNA(Gln) through the transamidation of misacylated Asp-tRNA(Asn) or Glu-tRNA(Gln) in organisms which lack either or both of asparaginyl-tRNA or glutaminyl-tRNA synthetases. The reaction takes place in the presence of glutamine and ATP through an activated phospho-Asp-tRNA(Asn) or phospho-Glu-tRNA(Gln). The chain is Aspartyl/glutamyl-tRNA(Asn/Gln) amidotransferase subunit B from Pseudomonas putida (strain ATCC 47054 / DSM 6125 / CFBP 8728 / NCIMB 11950 / KT2440).